A 407-amino-acid polypeptide reads, in one-letter code: Probable endo-beta-1,4-glucanase celB (407 aa).

Residues 1–18 (MALTLAATALVLLPLVTA) form the signal peptide. An N-linked (GlcNAc...) asparagine glycan is attached at asparagine 136. Glutamate 216 (nucleophile) is an active-site residue. The Proton donor role is filled by glutamate 221.

The protein belongs to the glycosyl hydrolase 7 (cellulase C) family.

The protein resides in the secreted. The catalysed reaction is Endohydrolysis of (1-&gt;4)-beta-D-glucosidic linkages in cellulose, lichenin and cereal beta-D-glucans.. Functionally, has endoglucanase activity on substrates containing beta-1,4 glycosidic bonds, like in carboxymethylcellulose (CMC), hydroxyethylcellulose (HEC) and beta-glucan. Involved in the degradation of complex natural cellulosic substrates. This Neosartorya fischeri (strain ATCC 1020 / DSM 3700 / CBS 544.65 / FGSC A1164 / JCM 1740 / NRRL 181 / WB 181) (Aspergillus fischerianus) protein is Probable endo-beta-1,4-glucanase celB (celB).